We begin with the raw amino-acid sequence, 414 residues long: Sarcosine oxidase subunit beta (414 aa).

6 residues coordinate FAD: G42, H43, E64, N72, T77, and I79. Residue H183 is modified to Tele-8alpha-FMN histidine. The FAD site is built by V207, G364, G367, and K369.

This sequence belongs to the SoxB family. As to quaternary structure, heterotetramer composed of subunits alpha (SoxA), beta (SoxB), gamma (SoxG) and delta (SoxD). The cofactor is FAD. FMN is required as a cofactor.

It localises to the cytoplasm. It carries out the reaction sarcosine + (6S)-5,6,7,8-tetrahydrofolate + O2 = (6R)-5,10-methylene-5,6,7,8-tetrahydrofolate + glycine + H2O2. It catalyses the reaction sarcosine + O2 + H2O = formaldehyde + glycine + H2O2. In the presence of tetrahydrofolate, catalyzes the oxidative demethylation of sarcosine to yield glycine, 5,10-methylenetetrahydrofolate and hydrogen peroxide. In the absence of tetrahydrofolate, catalyzes the oxidative demethylation of sarcosine to yield glycine, formaldehyde and hydrogen peroxide. The chain is Sarcosine oxidase subunit beta (soxB) from Rhodobacter capsulatus (strain ATCC BAA-309 / NBRC 16581 / SB1003).